The sequence spans 366 residues: Isocitrate dehydrogenase [NAD] subunit alpha, mitochondrial (366 aa).

A mitochondrion-targeting transit peptide spans 1-27 (MAGPAWISKVSRLLGAFHNQKQVTRGF). Lys-77 carries the post-translational modification N6-succinyllysine. Thr-101 carries the phosphothreonine modification. 3 residues coordinate substrate: Arg-115, Arg-125, and Arg-146. Position 223 is an N6-acetyllysine (Lys-223). Mg(2+) is bound by residues Asp-233, Asp-257, and Asp-261. At Lys-343 the chain carries N6-acetyllysine; alternate. Lys-343 carries the post-translational modification N6-succinyllysine; alternate. Lys-350 carries the post-translational modification N6-succinyllysine.

This sequence belongs to the isocitrate and isopropylmalate dehydrogenases family. Heterooligomer of subunits alpha (IDH3A), beta (IDH3B), and gamma (IDH3G) in the apparent ratio of 2:1:1. The heterodimer containing one IDH3A and one IDH3B subunit and the heterodimer containing one IDH3A and one IDH3G subunit assemble into a heterotetramer (which contains two subunits of IDH3A, one of IDH3B and one of IDH3G) and further into the heterooctamer. It depends on Mg(2+) as a cofactor. Requires Mn(2+) as cofactor.

It localises to the mitochondrion. The catalysed reaction is D-threo-isocitrate + NAD(+) = 2-oxoglutarate + CO2 + NADH. Its activity is regulated as follows. The heterotetramer and the heterodimer composed of IDH3A and IDH3G subunits can be allosterically activated by citrate (CIT) or/and ADP, and the two activators can act independently or synergistically. The heterodimer composed of IDH3A and IDH3B subunits cannot be allosterically regulated and the allosteric regulation of the heterotetramer is through the IDH3G subunit and not the IDH3B subunit. The IDH3G subunit contains the allosteric site which consists of a CIT-binding site and an ADP-binding site, and the binding of CIT and ADP causes conformational changes at the allosteric site which are transmitted to the active site in the catalytic subunit (IDH3A) through a cascade of conformational changes at the heterodimer interface, leading to stabilization of the isocitrate-binding at the active site and thus activation of the enzyme. ATP can activate the heterotetramer and the heterodimer composed of IDH3A and IDH3G subunits at low concentrations but inhibits their activities at high concentrations, whereas ATP exhibits only inhibitory effect on the heterodimer composed of IDH3A and IDH3B subunits. In terms of biological role, catalytic subunit of the enzyme which catalyzes the decarboxylation of isocitrate (ICT) into alpha-ketoglutarate. The heterodimer composed of the alpha (IDH3A) and beta (IDH3B) subunits and the heterodimer composed of the alpha (IDH3A) and gamma (IDH3G) subunits, have considerable basal activity but the full activity of the heterotetramer (containing two subunits of IDH3A, one of IDH3B and one of IDH3G) requires the assembly and cooperative function of both heterodimers. This Sus scrofa (Pig) protein is Isocitrate dehydrogenase [NAD] subunit alpha, mitochondrial (IDH3A).